The chain runs to 1342 residues: DNA-directed RNA polymerase subunit beta (1342 aa).

It belongs to the RNA polymerase beta chain family. As to quaternary structure, the RNAP catalytic core consists of 2 alpha, 1 beta, 1 beta' and 1 omega subunit. When a sigma factor is associated with the core the holoenzyme is formed, which can initiate transcription.

It catalyses the reaction RNA(n) + a ribonucleoside 5'-triphosphate = RNA(n+1) + diphosphate. DNA-dependent RNA polymerase catalyzes the transcription of DNA into RNA using the four ribonucleoside triphosphates as substrates. This is DNA-directed RNA polymerase subunit beta from Aeromonas salmonicida (strain A449).